A 146-amino-acid polypeptide reads, in one-letter code: Cytochrome c oxidase subunit 5A, mitochondrial (146 aa).

The N-terminal 37 residues, M1–Y37, are a transit peptide targeting the mitochondrion. The short motif at L2 to R16 is the SIFI-degron element. N6-acetyllysine is present on residues K83 and K109. Residue T137 is modified to Phosphothreonine.

The protein belongs to the cytochrome c oxidase subunit 5A family. As to quaternary structure, component of the cytochrome c oxidase (complex IV, CIV), a multisubunit enzyme composed of 14 subunits. The complex is composed of a catalytic core of 3 subunits MT-CO1, MT-CO2 and MT-CO3, encoded in the mitochondrial DNA, and 11 supernumerary subunits COX4I, COX5A, COX5B, COX6A, COX6B, COX6C, COX7A, COX7B, COX7C, COX8 and NDUFA4, which are encoded in the nuclear genome. The complex exists as a monomer or a dimer and forms supercomplexes (SCs) in the inner mitochondrial membrane with NADH-ubiquinone oxidoreductase (complex I, CI) and ubiquinol-cytochrome c oxidoreductase (cytochrome b-c1 complex, complex III, CIII), resulting in different assemblies (supercomplex SCI(1)III(2)IV(1) and megacomplex MCI(2)III(2)IV(2)). Interacts with AFG1L. Interacts with RAB5IF. In response to mitochondrial stress, the precursor protein is ubiquitinated by the SIFI complex in the cytoplasm before mitochondrial import, leading to its degradation. Within the SIFI complex, UBR4 initiates ubiquitin chain that are further elongated or branched by KCMF1.

The protein localises to the mitochondrion inner membrane. Its pathway is energy metabolism; oxidative phosphorylation. In terms of biological role, component of the cytochrome c oxidase, the last enzyme in the mitochondrial electron transport chain which drives oxidative phosphorylation. The respiratory chain contains 3 multisubunit complexes succinate dehydrogenase (complex II, CII), ubiquinol-cytochrome c oxidoreductase (cytochrome b-c1 complex, complex III, CIII) and cytochrome c oxidase (complex IV, CIV), that cooperate to transfer electrons derived from NADH and succinate to molecular oxygen, creating an electrochemical gradient over the inner membrane that drives transmembrane transport and the ATP synthase. Cytochrome c oxidase is the component of the respiratory chain that catalyzes the reduction of oxygen to water. Electrons originating from reduced cytochrome c in the intermembrane space (IMS) are transferred via the dinuclear copper A center (CU(A)) of subunit 2 and heme A of subunit 1 to the active site in subunit 1, a binuclear center (BNC) formed by heme A3 and copper B (CU(B)). The BNC reduces molecular oxygen to 2 water molecules using 4 electrons from cytochrome c in the IMS and 4 protons from the mitochondrial matrix. This is Cytochrome c oxidase subunit 5A, mitochondrial (Cox5a) from Mus musculus (Mouse).